A 71-amino-acid chain; its full sequence is Natterin-P (71 aa).

A signal peptide spans 1 to 18; that stretch reads MKLLVLLVTLLVLSWTSA. The propeptide occupies 19–45; that stretch reads EDLGDQEILENNEDNNHESELGEPAAQ. Residues 22–31 show a composition bias toward acidic residues; sequence GDQEILENNE. A disordered region spans residues 22-54; the sequence is GDQEILENNEDNNHESELGEPAAQHTDDETSQL. A disulfide bridge connects residues C62 and C71.

Belongs to the natterin family. As to expression, expressed by the venom gland.

The protein localises to the secreted. With respect to regulation, inhibited by tissue-kallikrein inhibitor TKI and trasylol. Plasma kallikrein inhibitor PKSI527 and classical inhibitors of serine-, metallo-, thiol- or aspartate-peptidases evokes a minor inhibition of the peptide digestion. In terms of biological role, shows nociceptive, edema-inducing and kininogenase activity with release of kallidin from low molecular weight kininogen. The cleavage occurs at Met-Lys bonds. This chain is Natterin-P, found in Thalassophryne nattereri (Copper Joe toadfish).